Here is a 144-residue protein sequence, read N- to C-terminus: Large ribosomal subunit protein uL15 (144 aa).

Residues 1–48 (MQLNNLKPAAGSKHAKRRVGRGIGSGLGKTAGRGHKGQKSRSGGFHKV) form a disordered region. A compositionally biased stretch (gly residues) spans 21–31 (RGIGSGLGKTA).

This sequence belongs to the universal ribosomal protein uL15 family. Part of the 50S ribosomal subunit.

Its function is as follows. Binds to the 23S rRNA. The protein is Large ribosomal subunit protein uL15 of Cupriavidus taiwanensis (strain DSM 17343 / BCRC 17206 / CCUG 44338 / CIP 107171 / LMG 19424 / R1) (Ralstonia taiwanensis (strain LMG 19424)).